The following is a 251-amino-acid chain: Phosphate import ATP-binding protein PstB (251 aa).

The ABC transporter domain occupies 5 to 246; that stretch reads IKIRGVNFFY…PRDKRTEDYI (242 aa). 37–44 lines the ATP pocket; the sequence is GPSGCGKS.

The protein belongs to the ABC transporter superfamily. Phosphate importer (TC 3.A.1.7) family. In terms of assembly, the complex is composed of two ATP-binding proteins (PstB), two transmembrane proteins (PstC and PstA) and a solute-binding protein (PstS).

Its subcellular location is the cell membrane. The catalysed reaction is phosphate(out) + ATP + H2O = ADP + 2 phosphate(in) + H(+). Its function is as follows. Part of the ABC transporter complex PstSACB involved in phosphate import. Responsible for energy coupling to the transport system. This chain is Phosphate import ATP-binding protein PstB, found in Dehalococcoides mccartyi (strain CBDB1).